The chain runs to 421 residues: CinA-like protein (421 aa).

This sequence belongs to the CinA family.

In Mycobacterium sp. (strain MCS), this protein is CinA-like protein.